A 345-amino-acid chain; its full sequence is Viral Fc-gamma receptor-like protein UL119 (345 aa).

The N-terminal stretch at 1–23 (MCSVLAIALVVALLGDMHPGVKS) is a signal peptide. Residues 23-42 (SSTTSAVTSPSNTTVTSTTS) form a disordered region. Residues 24–294 (STTSAVTSPS…KSDPLFEDRL (271 aa)) are Virion surface-facing. Residues Asn34, Asn48, Asn95, Asn104, Asn148, Asn179, Asn198, Asn217, Asn225, Asn241, Asn244, and Asn260 are each glycosylated (N-linked (GlcNAc...) asparagine; by host). Residues 91 to 190 (QVSLNATCKV…TWDLFTYPIY (100 aa)) form the Ig-like V-type domain. Residues 295–317 (LAYGVLAFLVFMVIILLYVTYML) traverse the membrane as a helical segment. The Intravirion portion of the chain corresponds to 318–345 (ARRRDWSYKRLEEPVEEKKHPVPYFKQW).

The protein localises to the virion membrane. Its function is as follows. Serves as a receptor for the Fc part of human IgG. May thus be involved in interfering with host Ig-mediated immune responses. In Human cytomegalovirus (strain AD169) (HHV-5), this protein is Viral Fc-gamma receptor-like protein UL119 (UL119/UL118).